The primary structure comprises 208 residues: Outer-membrane lipoprotein carrier protein (208 aa).

The first 22 residues, 1-22 (MKKIFTIAALSLPLFCHLPAMA), serve as a signal peptide directing secretion.

It belongs to the LolA family. In terms of assembly, monomer.

It localises to the periplasm. Functionally, participates in the translocation of lipoproteins from the inner membrane to the outer membrane. Only forms a complex with a lipoprotein if the residue after the N-terminal Cys is not an aspartate (The Asp acts as a targeting signal to indicate that the lipoprotein should stay in the inner membrane). This is Outer-membrane lipoprotein carrier protein from Shewanella pealeana (strain ATCC 700345 / ANG-SQ1).